We begin with the raw amino-acid sequence, 87 residues long: Conotoxin Ca6.2 (87 aa).

The N-terminal stretch at M1–G19 is a signal peptide. The propeptide occupies E20–R52. 3 disulfide bridges follow: C55–C64, C58–C70, and C63–C84.

This sequence belongs to the conotoxin Q superfamily. In terms of tissue distribution, expressed by the venom duct.

It is found in the secreted. This Conus caracteristicus (Characteristic cone) protein is Conotoxin Ca6.2.